Reading from the N-terminus, the 135-residue chain is Large ribosomal subunit protein mL61 (135 aa).

The span at 114 to 129 shows a compositional bias: basic and acidic residues; that stretch reads HHESSPENIKEAHKQD. The disordered stretch occupies residues 114-135; it reads HHESSPENIKEAHKQDYSPPSN.

It belongs to the mitochondrion-specific ribosomal protein mL61 family. Component of the mitochondrial large ribosomal subunit (mt-LSU). Mature yeast 74S mitochondrial ribosomes consist of a small (37S) and a large (54S) subunit. The 37S small subunit contains a 15S ribosomal RNA (15S mt-rRNA) and at least 32 different proteins. The 54S large subunit contains a 21S rRNA (21S mt-rRNA) and at least 45 different proteins.

The protein localises to the mitochondrion. Functionally, component of the mitochondrial ribosome (mitoribosome), a dedicated translation machinery responsible for the synthesis of mitochondrial genome-encoded proteins, including at least some of the essential transmembrane subunits of the mitochondrial respiratory chain. The mitoribosomes are attached to the mitochondrial inner membrane and translation products are cotranslationally integrated into the membrane. mL61 is not essential in cells grown at 30 degrees Celsius but is required for mitochondrial translation in cells grown at 18 degrees Celsius. This chain is Large ribosomal subunit protein mL61 (mrp49), found in Schizosaccharomyces pombe (strain 972 / ATCC 24843) (Fission yeast).